The following is a 353-amino-acid chain: Probable dual-specificity RNA methyltransferase RlmN (353 aa).

The active-site Proton acceptor is the E104. The region spanning 112–341 is the Radical SAM core domain; it reads DGGRKTICIS…ILNRRSPGKD (230 aa). C119 and C346 are joined by a disulfide. Residues C126, C130, and C133 each contribute to the [4Fe-4S] cluster site. S-adenosyl-L-methionine contacts are provided by residues 173–174, S205, 228–230, and N304; these read GE and SLN. C346 functions as the S-methylcysteine intermediate in the catalytic mechanism.

This sequence belongs to the radical SAM superfamily. RlmN family. It depends on [4Fe-4S] cluster as a cofactor.

The protein localises to the cytoplasm. It carries out the reaction adenosine(2503) in 23S rRNA + 2 reduced [2Fe-2S]-[ferredoxin] + 2 S-adenosyl-L-methionine = 2-methyladenosine(2503) in 23S rRNA + 5'-deoxyadenosine + L-methionine + 2 oxidized [2Fe-2S]-[ferredoxin] + S-adenosyl-L-homocysteine. The enzyme catalyses adenosine(37) in tRNA + 2 reduced [2Fe-2S]-[ferredoxin] + 2 S-adenosyl-L-methionine = 2-methyladenosine(37) in tRNA + 5'-deoxyadenosine + L-methionine + 2 oxidized [2Fe-2S]-[ferredoxin] + S-adenosyl-L-homocysteine. In terms of biological role, specifically methylates position 2 of adenine 2503 in 23S rRNA and position 2 of adenine 37 in tRNAs. The protein is Probable dual-specificity RNA methyltransferase RlmN of Leptospira interrogans serogroup Icterohaemorrhagiae serovar copenhageni (strain Fiocruz L1-130).